A 559-amino-acid polypeptide reads, in one-letter code: Sesquiterpene synthase TPS3 (559 aa).

Residues arginine 275, aspartate 312, aspartate 316, arginine 453, and aspartate 456 each coordinate (2E,6E)-farnesyl diphosphate. Residues aspartate 312 and aspartate 316 each coordinate Mg(2+). Positions aspartate 312–aspartate 316 match the DDXXD motif motif. Mg(2+)-binding residues include aspartate 456, threonine 460, and glutamate 464.

Belongs to the terpene synthase family. Tpsa subfamily. As to quaternary structure, monomer. Mg(2+) serves as cofactor. As to expression, highly expressed in glandular trichomes. Expressed in roots and leaves.

It is found in the cytoplasm. It catalyses the reaction (2E,6E)-farnesyl diphosphate = (+)-(R)-germacrene A + diphosphate. Its pathway is secondary metabolite biosynthesis; terpenoid biosynthesis. Sesquiterpene synthase involved in the biosynthesis of volatile compounds. Mediates the conversion of (2E,6E)-farnesyl diphosphate (FPP) into (+)-(R)-germacrene A. In Xanthium strumarium (Rough cocklebur), this protein is Sesquiterpene synthase TPS3.